Here is a 295-residue protein sequence, read N- to C-terminus: MFCLQSSQALQVLENSLRKHLPESLKVYGTVFHINQGNPFKLKTLVDKWPDFNTVVIRPQEEDMTDDLDHYNNTYLVYSKDPKHCQEFLGSSEVINWKQHLQIQSSQSDLGKVIESLGATNLGKVKHKQCFLYMVCQTAKKLAPSLMDAKNLVVSRNKLTPLDQQLFKFASLDVTHAALVNSLWHFGGNEKSQKFIERCIFTFPSFCIMGPEGTPVSWTLMDHTGELRMGGTLPKYRRQSLIYHVASQQIQTLEKLGFPMYAHVDKANFTVQRMVGLLGQILLPCTWNQWNCVPL.

Lys41 bears the N6-acetyllysine; alternate mark. Residue Lys41 is modified to N6-succinyllysine; alternate. N6-acetyllysine is present on Lys43. Position 48 is an N6-acetyllysine; alternate (Lys48). N6-succinyllysine; alternate is present on Lys48. 2 positions are modified to N6-acetyllysine: Lys80 and Lys83. N6-acetyllysine; alternate is present on residues Lys124, Lys128, and Lys140. N6-succinyllysine; alternate is present on residues Lys124, Lys128, and Lys140. Residue Lys150 is modified to N6-acetyllysine. The residue at position 255 (Lys255) is an N6-acetyllysine; alternate. N6-succinyllysine; alternate is present on Lys255.

Belongs to the glycine N-acyltransferase family. Binds to microtubules.

Its subcellular location is the cytoplasm. The protein resides in the cytoskeleton. It is found in the microtubule organizing center. It localises to the centrosome. The enzyme catalyses an acyl-CoA + glycine = an N-acylglycine + CoA + H(+). Its function is as follows. Acyltransferase which transfers the acyl group to the N-terminus of glycine. Can conjugate a multitude of substrates to form a variety of N-acylglycines. The sequence is that of Glycine N-acyltransferase-like protein Keg1 (Keg1) from Mus musculus (Mouse).